The chain runs to 114 residues: Probable non-functional T cell receptor beta variable 5-3 (114 aa).

A signal peptide spans 1–21; sequence MGPGLLCWELLYLLGAGPVEA. The Ig-like domain occupies 22–114; that stretch reads GVTQSPTHLI…SALYLCARSL (93 aa). A disulfide bridge links C42 with C110. N96 carries an N-linked (GlcNAc...) asparagine glycan.

In terms of assembly, alpha-beta TR is a heterodimer composed of an alpha and beta chain; disulfide-linked. The alpha-beta TR is associated with the transmembrane signaling CD3 coreceptor proteins to form the TR-CD3 (TcR or TCR). The assembly of alpha-beta TR heterodimers with CD3 occurs in the endoplasmic reticulum where a single alpha-beta TR heterodimer associates with one CD3D-CD3E heterodimer, one CD3G-CD3E heterodimer and one CD247 homodimer forming a stable octameric structure. CD3D-CD3E and CD3G-CD3E heterodimers preferentially associate with TR alpha and TR beta chains, respectively. The association of the CD247 homodimer is the last step of TcR assembly in the endoplasmic reticulum and is required for transport to the cell surface.

The protein localises to the cell membrane. In terms of biological role, probable non-functional open reading frame (ORF) of V region of the variable domain of T cell receptor (TR) beta chain. Non-functional ORF generally cannot participate in the synthesis of a productive T cell receptor (TR) chain due to altered V-(D)-J or switch recombination and/or splicing site (at mRNA level) and/or conserved amino acid change (protein level). Alpha-beta T cell receptors are antigen specific receptors which are essential to the immune response and are present on the cell surface of T lymphocytes. Recognize peptide-major histocompatibility (MH) (pMH) complexes that are displayed by antigen presenting cells (APC), a prerequisite for efficient T cell adaptive immunity against pathogens. Binding of alpha-beta TR to pMH complex initiates TR-CD3 clustering on the cell surface and intracellular activation of LCK that phosphorylates the ITAM motifs of CD3G, CD3D, CD3E and CD247 enabling the recruitment of ZAP70. In turn ZAP70 phosphorylates LAT, which recruits numerous signaling molecules to form the LAT signalosome. The LAT signalosome propagates signal branching to three major signaling pathways, the calcium, the mitogen-activated protein kinase (MAPK) kinase and the nuclear factor NF-kappa-B (NF-kB) pathways, leading to the mobilization of transcription factors that are critical for gene expression and essential for T cell growth and differentiation. The T cell repertoire is generated in the thymus, by V-(D)-J rearrangement. This repertoire is then shaped by intrathymic selection events to generate a peripheral T cell pool of self-MH restricted, non-autoaggressive T cells. Post-thymic interaction of alpha-beta TR with the pMH complexes shapes TR structural and functional avidity. The chain is Probable non-functional T cell receptor beta variable 5-3 from Homo sapiens (Human).